The chain runs to 259 residues: Putative protein-disulfide oxidoreductase RBE_1288 (259 aa).

An N-terminal signal peptide occupies residues 1–20 (MRNSFITLIFLLLLSGCSEE). Positions 25 to 54 (VEQESSESITPAQASTSDENNNQTTETTTP) are disordered. Positions 33 to 42 (ITPAQASTSD) are enriched in polar residues. A compositionally biased stretch (low complexity) spans 43–54 (ENNNQTTETTTP). In terms of domain architecture, Thioredoxin spans 47 to 251 (QTTETTTPAV…ISAAIDKAIE (205 aa)). Cys104 and Cys107 are joined by a disulfide.

It belongs to the thioredoxin family. DsbA subfamily.

It localises to the periplasm. Its function is as follows. May be required for disulfide bond formation in some proteins. The sequence is that of Putative protein-disulfide oxidoreductase RBE_1288 from Rickettsia bellii (strain RML369-C).